The following is a 401-amino-acid chain: Dihydrolipoyllysine-residue succinyltransferase component of 2-oxoglutarate dehydrogenase complex (401 aa).

The Lipoyl-binding domain occupies Ser2–Asn77. Lys43 carries the post-translational modification N6-lipoyllysine. The region spanning Ile115–Ile152 is the Peripheral subunit-binding (PSBD) domain. Residues His372 and Asp376 contribute to the active site.

This sequence belongs to the 2-oxoacid dehydrogenase family. Forms a 24-polypeptide structural core with octahedral symmetry. Part of the 2-oxoglutarate dehydrogenase (OGDH) complex composed of E1 (2-oxoglutarate dehydrogenase), E2 (dihydrolipoamide succinyltransferase) and E3 (dihydrolipoamide dehydrogenase); the complex contains multiple copies of the three enzymatic components (E1, E2 and E3). The cofactor is (R)-lipoate.

The enzyme catalyses N(6)-[(R)-dihydrolipoyl]-L-lysyl-[protein] + succinyl-CoA = N(6)-[(R)-S(8)-succinyldihydrolipoyl]-L-lysyl-[protein] + CoA. Its pathway is amino-acid degradation; L-lysine degradation via saccharopine pathway; glutaryl-CoA from L-lysine: step 6/6. Its function is as follows. E2 component of the 2-oxoglutarate dehydrogenase (OGDH) complex which catalyzes the second step in the conversion of 2-oxoglutarate to succinyl-CoA and CO(2). This is Dihydrolipoyllysine-residue succinyltransferase component of 2-oxoglutarate dehydrogenase complex (sucB) from Rickettsia felis (strain ATCC VR-1525 / URRWXCal2) (Rickettsia azadi).